Consider the following 542-residue polypeptide: CTP synthase (542 aa).

An amidoligase domain region spans residues 1 to 265 (MTRYIFVTGG…DDIVVERFGL (265 aa)). S13 is a binding site for CTP. S13 is a binding site for UTP. Residues 14–19 (SLGKGI) and D71 contribute to the ATP site. 2 residues coordinate Mg(2+): D71 and E139. Residues 146–148 (DIE), 186–191 (KTKPTQ), and K222 contribute to the CTP site. UTP is bound by residues 186–191 (KTKPTQ) and K222. Residues 290 to 541 (TIAMVGKYME…VNAALKYSGK (252 aa)) enclose the Glutamine amidotransferase type-1 domain. Position 351 (G351) interacts with L-glutamine. C378 serves as the catalytic Nucleophile; for glutamine hydrolysis. L-glutamine contacts are provided by residues 379–382 (LGMQ), E402, and R469. Active-site residues include H514 and E516.

The protein belongs to the CTP synthase family. In terms of assembly, homotetramer.

It carries out the reaction UTP + L-glutamine + ATP + H2O = CTP + L-glutamate + ADP + phosphate + 2 H(+). The enzyme catalyses L-glutamine + H2O = L-glutamate + NH4(+). It catalyses the reaction UTP + NH4(+) + ATP = CTP + ADP + phosphate + 2 H(+). Its pathway is pyrimidine metabolism; CTP biosynthesis via de novo pathway; CTP from UDP: step 2/2. Its activity is regulated as follows. Allosterically activated by GTP, when glutamine is the substrate; GTP has no effect on the reaction when ammonia is the substrate. The allosteric effector GTP functions by stabilizing the protein conformation that binds the tetrahedral intermediate(s) formed during glutamine hydrolysis. Inhibited by the product CTP, via allosteric rather than competitive inhibition. Catalyzes the ATP-dependent amination of UTP to CTP with either L-glutamine or ammonia as the source of nitrogen. Regulates intracellular CTP levels through interactions with the four ribonucleotide triphosphates. The chain is CTP synthase from Pseudomonas aeruginosa (strain LESB58).